Consider the following 513-residue polypeptide: Maturase K (513 aa).

It belongs to the intron maturase 2 family. MatK subfamily.

Its subcellular location is the plastid. It is found in the chloroplast. Functionally, usually encoded in the trnK tRNA gene intron. Probably assists in splicing its own and other chloroplast group II introns. This is Maturase K from Danthonia spicata (Poverty oatgrass).